A 435-amino-acid polypeptide reads, in one-letter code: Monodehydroascorbate reductase 2 (435 aa).

FAD is bound by residues 14 to 17, Glu-41, Arg-48, Lys-53, Ile-96, and 147 to 148; these read GGVA and RE. NAD(+)-binding positions include 172-178, Glu-196, Arg-202, and Gly-261; that span reads GGYIGLE. 174–178 lines the NADP(+) pocket; that stretch reads YIGLE. Arg-202 and Gly-261 together coordinate NADP(+). Residue Asp-298 participates in FAD binding. 314–315 provides a ligand contact to NAD(+); it reads EH. Residue 314–315 participates in NADP(+) binding; the sequence is EH. Val-316 serves as a coordination point for FAD. Arg-320 is an L-ascorbate binding site. Tyr-349 is a binding site for FAD. NAD(+) is bound at residue Tyr-349. Tyr-349 lines the NADP(+) pocket. An L-ascorbate-binding site is contributed by Arg-351. Position 417 is a phosphoserine (Ser-417).

This sequence belongs to the FAD-dependent oxidoreductase family. It depends on FAD as a cofactor.

The protein resides in the cytoplasm. The enzyme catalyses 2 monodehydro-L-ascorbate radical + NADH + H(+) = 2 L-ascorbate + NAD(+). Catalyzes the conversion of monodehydroascorbate to ascorbate, oxidizing NADH in the process. The protein is Monodehydroascorbate reductase 2 of Arabidopsis thaliana (Mouse-ear cress).